The sequence spans 353 residues: Nicotinate-nucleotide--dimethylbenzimidazole phosphoribosyltransferase (353 aa).

Glu-319 functions as the Proton acceptor in the catalytic mechanism.

It belongs to the CobT family.

It carries out the reaction 5,6-dimethylbenzimidazole + nicotinate beta-D-ribonucleotide = alpha-ribazole 5'-phosphate + nicotinate + H(+). It participates in nucleoside biosynthesis; alpha-ribazole biosynthesis; alpha-ribazole from 5,6-dimethylbenzimidazole: step 1/2. Functionally, catalyzes the synthesis of alpha-ribazole-5'-phosphate from nicotinate mononucleotide (NAMN) and 5,6-dimethylbenzimidazole (DMB). This chain is Nicotinate-nucleotide--dimethylbenzimidazole phosphoribosyltransferase, found in Chlorobaculum parvum (strain DSM 263 / NCIMB 8327) (Chlorobium vibrioforme subsp. thiosulfatophilum).